A 79-amino-acid chain; its full sequence is Small ribosomal subunit protein bS21 (79 aa).

Residues 58–79 (ARKKMQREGLLPMKPKPMPGMR) are disordered.

This sequence belongs to the bacterial ribosomal protein bS21 family.

The protein is Small ribosomal subunit protein bS21 of Beijerinckia indica subsp. indica (strain ATCC 9039 / DSM 1715 / NCIMB 8712).